The sequence spans 94 residues: Cyclin-dependent kinases regulatory subunit (94 aa).

It belongs to the CKS family. As to quaternary structure, forms a homohexamer that can probably bind six kinase subunits. Interacts with cdk-1.

It is found in the nucleus. Its function is as follows. Binds to the catalytic subunit of the cyclin dependent kinases and is essential for their biological function. Has a role in the exit from M phase during early mitotic cell division. More specifically, thought to act by the degrading B-type cyclins that causes breakdown of nuclear envelope and exit mitosis. This chain is Cyclin-dependent kinases regulatory subunit, found in Caenorhabditis briggsae.